Here is a 270-residue protein sequence, read N- to C-terminus: Phosphatidate cytidylyltransferase (270 aa).

7 helical membrane-spanning segments follow: residues 19-39 (LWLTWVGGVGFTLFSIAIGLA), 53-73 (TAFSRLFGWAWLIVTGILLIL), 76-96 (GALLTIGFLVAGCAILLVTQW), 101-121 (GWPAAGLFYAGFSALSLSLLR), 126-146 (FGFTTIVFLFAVVWSTDITAY), 183-203 (LVASLVAAPGGWGVPVLALLL), and 248-268 (ALLYLFGAIFAEPDVLSAIFF).

It belongs to the CDS family.

It is found in the cell inner membrane. It carries out the reaction a 1,2-diacyl-sn-glycero-3-phosphate + CTP + H(+) = a CDP-1,2-diacyl-sn-glycerol + diphosphate. It participates in phospholipid metabolism; CDP-diacylglycerol biosynthesis; CDP-diacylglycerol from sn-glycerol 3-phosphate: step 3/3. The sequence is that of Phosphatidate cytidylyltransferase (cdsA) from Brucella abortus (strain 2308).